The following is a 153-amino-acid chain: TM2 domain-containing protein DDB_G0277895 (153 aa).

In terms of domain architecture, TM2 spans 3–50 (QKSVCVTYLLWLFFGLFGIHRFYLNRPCSGVLYLFTCGCFFIGWFIDI). Helical transmembrane passes span 6–26 (VCVTYLLWLFFGLFGIHRFYL) and 33–53 (VLYLFTCGCFFIGWFIDICLI). The segment at 85-153 (GSPQQQPYGA…GNYPPPYGPQ (69 aa)) is disordered. Tandem repeats lie at residues 89–96 (QQPYGAPP), 97–104 (QQPYGAPP), 105–112 (QQPYGAPP), 113–120 (QQPYGAPP), 121–128 (QQPYGAPP), and 129–136 (PQPYGAPP). Positions 89 to 136 (QQPYGAPPQQPYGAPPQQPYGAPPQQPYGAPPQQPYGAPPPQPYGAPP) are 6 X 8 AA tandem repeat of Q-Q-P-Y-G-A-P-P. Positions 93–153 (GAPPQQPYGA…GNYPPPYGPQ (61 aa)) are enriched in pro residues.

The protein belongs to the TM2 family.

The protein resides in the membrane. The protein is TM2 domain-containing protein DDB_G0277895 of Dictyostelium discoideum (Social amoeba).